We begin with the raw amino-acid sequence, 463 residues long: Chromosomal replication initiator protein DnaA (463 aa).

The tract at residues 1–83 (MSTNQIILTD…LQLFQHYNNT (83 aa)) is domain I, interacts with DnaA modulators. The segment at 83 to 124 (TIKSIEIITKELPGTTQTVTELPTKTFADIGSSELNSENIFS) is domain II. The segment at 125 to 343 (TLDVRFTFDN…GALNKVIAHS (219 aa)) is domain III, AAA+ region. Residues Gly171, Gly173, Lys174, and Thr175 each coordinate ATP. The tract at residues 344–463 (NFTLKEITLE…INLLMKILQN (120 aa)) is domain IV, binds dsDNA.

This sequence belongs to the DnaA family. Oligomerizes as a right-handed, spiral filament on DNA at oriC.

The protein localises to the cytoplasm. Functionally, plays an essential role in the initiation and regulation of chromosomal replication. ATP-DnaA binds to the origin of replication (oriC) to initiate formation of the DNA replication initiation complex once per cell cycle. Binds the DnaA box (a 9 base pair repeat at the origin) and separates the double-stranded (ds)DNA. Forms a right-handed helical filament on oriC DNA; dsDNA binds to the exterior of the filament while single-stranded (ss)DNA is stabiized in the filament's interior. The ATP-DnaA-oriC complex binds and stabilizes one strand of the AT-rich DNA unwinding element (DUE), permitting loading of DNA polymerase. After initiation quickly degrades to an ADP-DnaA complex that is not apt for DNA replication. Binds acidic phospholipids. In Rickettsia conorii (strain ATCC VR-613 / Malish 7), this protein is Chromosomal replication initiator protein DnaA.